The following is a 134-amino-acid chain: U-scoloptoxin(05)-Er2a (134 aa).

A signal peptide spans M1–P19.

This sequence belongs to the scoloptoxin-05 family. In terms of processing, contains 5 disulfide bonds. Expressed by the venom gland.

It localises to the secreted. This Ethmostigmus rubripes (Giant centipede) protein is U-scoloptoxin(05)-Er2a.